Reading from the N-terminus, the 240-residue chain is 3-deoxy-D-manno-octulosonic acid kinase (240 aa).

Aspartate 170 is a catalytic residue.

This sequence belongs to the protein kinase superfamily. KdkA/RfaP family.

The protein localises to the cell inner membrane. It catalyses the reaction an alpha-Kdo-(2-&gt;6)-lipid IVA + ATP = a 4-O-phospho-alpha-Kdo-(2-&gt;6)-lipid IVA + ADP + H(+). Its pathway is bacterial outer membrane biogenesis; LPS core biosynthesis. Functionally, catalyzes the ATP-dependent phosphorylation of the 3-deoxy-D-manno-octulosonic acid (Kdo) residue in Kdo-lipid IV(A) at the 4-OH position. The chain is 3-deoxy-D-manno-octulosonic acid kinase from Actinobacillus succinogenes (strain ATCC 55618 / DSM 22257 / CCUG 43843 / 130Z).